Consider the following 217-residue polypeptide: Octanoyltransferase (217 aa).

In terms of domain architecture, BPL/LPL catalytic spans 32–207 (SDSPDELWIV…TLSQLLGYQQ (176 aa)). Residues 71–78 (RGGQVTYH), 138–140 (SLG), and 151–153 (GLA) each bind substrate. Residue C169 is the Acyl-thioester intermediate of the active site.

The protein belongs to the LipB family.

It is found in the cytoplasm. The enzyme catalyses octanoyl-[ACP] + L-lysyl-[protein] = N(6)-octanoyl-L-lysyl-[protein] + holo-[ACP] + H(+). It functions in the pathway protein modification; protein lipoylation via endogenous pathway; protein N(6)-(lipoyl)lysine from octanoyl-[acyl-carrier-protein]: step 1/2. Its function is as follows. Catalyzes the transfer of endogenously produced octanoic acid from octanoyl-acyl-carrier-protein onto the lipoyl domains of lipoate-dependent enzymes. Lipoyl-ACP can also act as a substrate although octanoyl-ACP is likely to be the physiological substrate. This is Octanoyltransferase from Shewanella sp. (strain MR-7).